A 212-amino-acid chain; its full sequence is MGMWSLGLGAVGAAIAGLILANTDFLLTKSAPATVDYLANADLKTIDGDERSLKAKALWEKSGAVIMAVRRPGUFLCREEASELSSLKPQLDELGVPLYAVVKENVGTEIQDFRPHFAGEIFLDEKQAFYGPQQRKMGGLGFIRLGVWQNFVRAWRAGYQGNMNGEGFILGGVFVMGSGGQGVLLEHREKEFGDKVSLESVLEAAKKVVVEK.

A thioredoxin fold region spans residues 3 to 101 (MWSLGLGAVG…DELGVPLYAV (99 aa)). Residue Sec-74 is a non-standard amino acid, selenocysteine. The Redox-active role is filled by Cys-77.

Belongs to the peroxiredoxin-like PRXL2 family. PRXL2A subfamily. Expressed in kidney marrow.

Its subcellular location is the cytoplasm. Involved in redox regulation of the cell. Acts as an antioxidant. This chain is Peroxiredoxin-like 2A (prxl2a), found in Danio rerio (Zebrafish).